The primary structure comprises 37 residues: Large ribosomal subunit protein bL36c (37 aa).

The protein belongs to the bacterial ribosomal protein bL36 family.

It localises to the plastid. It is found in the cyanelle. In Cyanophora paradoxa, this protein is Large ribosomal subunit protein bL36c (rpl36).